The sequence spans 323 residues: Fructose-1,6-bisphosphatase class 1 (323 aa).

The Mg(2+) site is built by Glu84, Asp103, Leu105, and Asp106. Substrate-binding positions include 106–109, Asn198, and Lys264; that span reads DGSS. Glu270 contributes to the Mg(2+) binding site.

The protein belongs to the FBPase class 1 family. As to quaternary structure, homotetramer. Requires Mg(2+) as cofactor.

It localises to the cytoplasm. The enzyme catalyses beta-D-fructose 1,6-bisphosphate + H2O = beta-D-fructose 6-phosphate + phosphate. The protein operates within carbohydrate biosynthesis; gluconeogenesis. The protein is Fructose-1,6-bisphosphatase class 1 of Pseudoalteromonas atlantica (strain T6c / ATCC BAA-1087).